Reading from the N-terminus, the 195-residue chain is uncharacterized protein (195 aa).

Residues 175-195 (ILGKISGFFGSIVSTIFSLFG) traverse the membrane as a helical segment.

It is found in the membrane. This is an uncharacterized protein from Methanocaldococcus jannaschii (strain ATCC 43067 / DSM 2661 / JAL-1 / JCM 10045 / NBRC 100440) (Methanococcus jannaschii).